The following is a 302-amino-acid chain: Bifunctional ligase/repressor BirA (302 aa).

Positions Gln14 to Gln33 form a DNA-binding region, H-T-H motif. Residues Gln62–Glu236 form the BPL/LPL catalytic domain. Biotin is bound by residues Ser80–Asn82, Gln103, Arg107–Arg109, and Lys167.

This sequence belongs to the biotin--protein ligase family.

It carries out the reaction biotin + L-lysyl-[protein] + ATP = N(6)-biotinyl-L-lysyl-[protein] + AMP + diphosphate + H(+). Functionally, acts both as a biotin--[acetyl-CoA-carboxylase] ligase and a biotin-operon repressor. In the presence of ATP, BirA activates biotin to form the BirA-biotinyl-5'-adenylate (BirA-bio-5'-AMP or holoBirA) complex. HoloBirA can either transfer the biotinyl moiety to the biotin carboxyl carrier protein (BCCP) subunit of acetyl-CoA carboxylase, or bind to the biotin operator site and inhibit transcription of the operon. The sequence is that of Bifunctional ligase/repressor BirA from Haemophilus influenzae (strain ATCC 51907 / DSM 11121 / KW20 / Rd).